A 53-amino-acid chain; its full sequence is U13-myrmicitoxin-Tb1a (53 aa).

Positions 1 to 23 (MKLIYIFSLVAVIAVTMIPGIMG) are cleaved as a signal peptide. Residues 24-29 (EAEAEG) constitute a propeptide that is removed on maturation. At Lys52 the chain carries Lysine amide.

As to expression, expressed by the venom gland.

It is found in the secreted. In vivo, this neurotoxin paralyzes about 70% of blowflies (L.caesar) one hour after intrathoracic injection, when tested at high doses (45 nmol/g). This Tetramorium bicarinatum (Tramp ant) protein is U13-myrmicitoxin-Tb1a.